The primary structure comprises 118 residues: RNA guanine-N7 methyltransferase activating subunit (118 aa).

Residue threonine 2 is modified to N-acetylthreonine. The tract at residues 2–55 (TDTAEAVPNFEEMFASRFTENDKEYQEYLKRPPESPPIVEEWNSRAGGNQRNRG) is interaction with RNMT. The tract at residues 30 to 118 (LKRPPESPPI…YNQRPPYGYY (89 aa)) is disordered. Residue serine 36 is modified to Phosphoserine. Residues 36–42 (SPPIVEE) carry the RNMT-activating domain motif. The span at 45–56 (SRAGGNQRNRGN) shows a compositional bias: low complexity. An RNA-binding region spans residues 56-118 (NRLQDNRQFR…YNQRPPYGYY (63 aa)). The segment covering 57–70 (RLQDNRQFRGRDNR) has biased composition (basic and acidic residues). The segment covering 76-93 (DNRSNQWHGRSWGNNYPQ) has biased composition (polar residues). Arginine 85 is subject to Omega-N-methylarginine. Phosphoserine is present on serine 86. A compositionally biased stretch (low complexity) spans 98 to 109 (PYYPQQYGHYGY).

Belongs to the RAM family. In terms of assembly, interacts with RNMT; this interaction enhances mRNA binding and cap methyltransferase activity.

Its subcellular location is the nucleus. Functionally, regulatory subunit of the mRNA-capping methyltransferase RNMT:RAMAC complex that methylates the N7 position of the added guanosine to the 5'-cap structure of mRNAs. Promotes the recruitment of the methyl donor, S-adenosyl-L-methionine, to RNMT. Regulates RNMT expression by a post-transcriptional stabilizing mechanism. Binds RNA. The chain is RNA guanine-N7 methyltransferase activating subunit (RAMAC) from Pongo abelii (Sumatran orangutan).